Consider the following 492-residue polypeptide: Cobyric acid synthase (492 aa).

Residues V253–A441 enclose the GATase cobBQ-type domain. Catalysis depends on C334, which acts as the Nucleophile. H433 is an active-site residue.

Belongs to the CobB/CobQ family. CobQ subfamily.

Its pathway is cofactor biosynthesis; adenosylcobalamin biosynthesis. Functionally, catalyzes amidations at positions B, D, E, and G on adenosylcobyrinic A,C-diamide. NH(2) groups are provided by glutamine, and one molecule of ATP is hydrogenolyzed for each amidation. The sequence is that of Cobyric acid synthase from Azoarcus sp. (strain BH72).